The primary structure comprises 20 residues: Alpha-1B-glycoprotein (20 aa).

The segment at 1–20 is disordered; that stretch reads AVVFDPQPALWAEADTQLEP.

As to quaternary structure, interacts with CRISP3. Glycosylated. As to expression, plasma.

It is found in the secreted. The sequence is that of Alpha-1B-glycoprotein (A1BG) from Equus asinus (Donkey).